Here is a 61-residue protein sequence, read N- to C-terminus: Large ribosomal subunit protein uL30 (61 aa).

It belongs to the universal ribosomal protein uL30 family. Part of the 50S ribosomal subunit.

The protein is Large ribosomal subunit protein uL30 of Laribacter hongkongensis (strain HLHK9).